A 778-amino-acid polypeptide reads, in one-letter code: Gelsolin (778 aa).

The first 23 residues, 1–23 (MGKQGFGYIFLTIFCTMALKLNC), serve as a signal peptide directing secretion. The interval 49 to 172 (MVEHAEFSKA…YKAGGVASGF (124 aa)) is actin-severing. The Gelsolin-like 1 repeat unit spans residues 72 to 154 (FDLVPVPKNL…VQGHESSTFL (83 aa)). The Ca(2+) site is built by glycine 88, aspartate 89, glutamate 120, aspartate 132, glycine 137, and alanine 139. The actin-actin interfilament contact point stretch occupies residues 119 to 122 (DERG). 158 to 165 (KSGIKYKA) provides a ligand contact to a 1,2-diacyl-sn-glycero-3-phospho-(1D-myo-inositol-4,5-bisphosphate). Residue valine 168 coordinates Ca(2+). An a 1,2-diacyl-sn-glycero-3-phospho-(1D-myo-inositol-4,5-bisphosphate)-binding site is contributed by 184 to 192 (RLLQVKGRR). Residues 193 to 266 (TVRATEVPVS…SEEGAEREEM (74 aa)) form a Gelsolin-like 2 repeat. Positions 209 and 210 each coordinate Ca(2+). Cysteines 211 and 224 form a disulfide. Ca(2+)-binding residues include glutamate 232, aspartate 282, glutamate 325, aspartate 326, glutamate 350, glycine 467, aspartate 468, glutamate 498, aspartate 510, glycine 515, proline 517, threonine 547, asparagine 587, aspartate 588, glutamate 610, aspartate 692, aspartate 693, and glutamate 715. Gelsolin-like repeat units follow at residues 313–385 (DENP…TPLF) and 451–532 (SEKV…PHLM). The tract at residues 430 to 778 (AAQHGMEDDG…LQRAMADVDV (349 aa)) is actin-binding, Ca-sensitive. Gelsolin-like repeat units lie at residues 574–638 (AVEL…DNFW) and 677–752 (IEEV…PPTF).

It belongs to the villin/gelsolin family. As to quaternary structure, binds to actin and to fibronectin. Highly expressed in homogene cells of the basilar papilla. Also detected in subcutaneous layer of the skin.

The protein localises to the secreted. It localises to the cytoplasm. The protein resides in the cytoskeleton. Calcium-regulated, actin-modulating protein that binds to the plus (or barbed) ends of actin monomers or filaments, preventing monomer exchange (end-blocking or capping). It can promote the assembly of monomers into filaments (nucleation) as well as sever filaments already formed. Plays a role in ciliogenesis. The chain is Gelsolin (GSN) from Gallus gallus (Chicken).